We begin with the raw amino-acid sequence, 388 residues long: MKKAVHFGAGNIGRGFIGEILSKNGFEIYFVDTNKAIIDELNTRHSYEIGIASSSPEKISVSGLFGINNGENPEDVIEAIAQADIVTKAIGPNILPYIAELVAKGIQKRKEENKQVQIDIIACENMIGGSEFLEKKVAEYLSDSDKVYLANYIGFPNAAVDRIVPGQKHEDLLYVEVEPFCEWVIDESQIKNKSFKLEGVHYANNLEPFIERKLFSVNSGHATVAYSSAYKGYKIILEGLQHKEILSALKGVQKETRALLLAKWPQYFTEEDLMSYHQMIISRFANPKIIDEVTRVARTPIRKLGYDERFIRPIRELNERGLSYQNHLDIVGKIFAYQDENDSQSVQLQEKLSTMDLQRLIEEVTGLSNKKIILEIELVIKKYKNDSK.

Residue 4 to 15 participates in NAD(+) binding; that stretch reads AVHFGAGNIGRG.

This sequence belongs to the mannitol dehydrogenase family.

It carries out the reaction D-mannitol 1-phosphate + NAD(+) = beta-D-fructose 6-phosphate + NADH + H(+). In Lactococcus lactis subsp. cremoris (strain SK11), this protein is Mannitol-1-phosphate 5-dehydrogenase.